A 270-amino-acid polypeptide reads, in one-letter code: Phosphatidate cytidylyltransferase (270 aa).

The next 7 helical transmembrane spans lie at 19–39 (LWLTWVGGVGFTLFSIAIGLA), 53–73 (TAFSRLFGWAWLIVTGILLIL), 76–96 (GALLTIGFLVAGCAILLVTQW), 101–121 (GWPAAGLFYAGFSALSLSLLR), 126–146 (FGFTTIVFLFAVVWSTDIAAY), 183–203 (LVASLVAAPGGWGVPVLALLL), and 248–268 (ALLYLFGAIFAEPDVPSAIFF).

Belongs to the CDS family.

The protein resides in the cell inner membrane. The catalysed reaction is a 1,2-diacyl-sn-glycero-3-phosphate + CTP + H(+) = a CDP-1,2-diacyl-sn-glycerol + diphosphate. It functions in the pathway phospholipid metabolism; CDP-diacylglycerol biosynthesis; CDP-diacylglycerol from sn-glycerol 3-phosphate: step 3/3. This chain is Phosphatidate cytidylyltransferase (cdsA), found in Brucella suis biovar 1 (strain 1330).